Here is a 654-residue protein sequence, read N- to C-terminus: tRNA uridine 5-carboxymethylaminomethyl modification enzyme MnmG (654 aa).

An FAD-binding site is contributed by 17–22 (GGGHAG). 289–303 (GPRYCPSIEDKIVKF) serves as a coordination point for NAD(+).

The protein belongs to the MnmG family. As to quaternary structure, homodimer. Heterotetramer of two MnmE and two MnmG subunits. FAD serves as cofactor.

The protein resides in the cytoplasm. NAD-binding protein involved in the addition of a carboxymethylaminomethyl (cmnm) group at the wobble position (U34) of certain tRNAs, forming tRNA-cmnm(5)s(2)U34. The polypeptide is tRNA uridine 5-carboxymethylaminomethyl modification enzyme MnmG (Prochlorococcus marinus (strain MIT 9515)).